A 245-amino-acid polypeptide reads, in one-letter code: Collagen triple helix repeat-containing protein 1 (245 aa).

Positions 1–32 are cleaved as a signal peptide; the sequence is MHPQGRAAPPQLLLGLFLVLLLLLQLSAPISA. One can recognise a Collagen-like domain in the interval 59-92; that stretch reads QGPAGVPGRDGSPGANGIPGTPGIPGRDGFKGEK. The segment at 64–87 is disordered; that stretch reads VPGRDGSPGANGIPGTPGIPGRDG. N-linked (GlcNAc...) asparagine glycosylation is present at asparagine 188.

N-glycosylated.

The protein resides in the secreted. It is found in the extracellular space. It localises to the extracellular matrix. Functionally, may act as a negative regulator of collagen matrix deposition. This chain is Collagen triple helix repeat-containing protein 1 (Cthrc1), found in Mus musculus (Mouse).